The chain runs to 138 residues: Thyrotropin subunit beta (138 aa).

Residues 1-20 (MSAAVLLSVLFALACGQAAS) form the signal peptide. 6 disulfide bridges follow: cysteine 22–cysteine 72, cysteine 36–cysteine 87, cysteine 39–cysteine 125, cysteine 47–cysteine 103, cysteine 51–cysteine 105, and cysteine 108–cysteine 115. The N-linked (GlcNAc...) asparagine glycan is linked to asparagine 43. The propeptide occupies 133 to 138 (LGGFSV).

It belongs to the glycoprotein hormones subunit beta family. Heterodimer of a common alpha chain and a unique beta chain which confers biological specificity to thyrotropin, lutropin, follitropin and gonadotropin.

Its subcellular location is the secreted. Functionally, indispensable for the control of thyroid structure and metabolism. In Mus musculus (Mouse), this protein is Thyrotropin subunit beta (Tshb).